We begin with the raw amino-acid sequence, 863 residues long: Facilitated trehalose transporter Tret1 (863 aa).

The tract at residues 1-208 (MSGRDNRGAG…RIGFQQQKAT (208 aa)) is disordered. The Cytoplasmic portion of the chain corresponds to 1–398 (MSGRDNRGAG…VYRPTTNPIY (398 aa)). A compositionally biased stretch (basic and acidic residues) spans 28–46 (KLKEKLTRAGEELGYHRVE). The span at 47–59 (SNLSASNTGTSLD) shows a compositional bias: polar residues. The span at 72 to 85 (AAPQRHPQQQFPHL) shows a compositional bias: low complexity. 2 stretches are compositionally biased toward polar residues: residues 114–129 (PPQQIQQQRSALRSSG) and 177–187 (KPQQQGNNKAA). Phosphoserine occurs at positions 254, 255, and 256. A disordered region spans residues 286–307 (VLQGSSTDSDEEGDDAEHKRLI). Phosphoserine occurs at positions 326 and 328. A disordered region spans residues 332–354 (FLTSRQNFQQQRSISTDSRKSRR). A compositionally biased stretch (polar residues) spans 336-347 (RQNFQQQRSIST). A helical membrane pass occupies residues 399–419 (IWTQVLAALSVSLGSLVVGFA). Over 420-446 (SAYTSPALVSMTNTNLTSFVVTPQAAS) the chain is Extracellular. Residue Asn434 is glycosylated (N-linked (GlcNAc...) asparagine). Residues 447–467 (WVGGIMPLAGLAGGIAGGPFI) form a helical membrane-spanning segment. The Cytoplasmic portion of the chain corresponds to 468 to 479 (EYLGRRNTILAT). Residues 480-500 (AVPFIISWLLIACAVNVVMVL) form a helical membrane-spanning segment. Over 501-503 (CGR) the chain is Extracellular. The helical transmembrane segment at 504 to 524 (FLAGFCVGIASLSLPVYLGET) threads the bilayer. Residues 525 to 530 (VQPEVR) are Cytoplasmic-facing. Residues 531–551 (GTLGLLPTAFGNIGILLCFVA) traverse the membrane as a helical segment. Residues 552 to 558 (GTYMDWS) lie on the Extracellular side of the membrane. Residues 559-579 (MLAFLGGTLPVPFLILMFLIP) form a helical membrane-spanning segment. The Cytoplasmic segment spans residues 580 to 642 (ETPRWYVSRG…ELLKRSNLKP (63 aa)). A helical transmembrane segment spans residues 643 to 663 (LSISLGLMFFQQLSGINAVIF). The Extracellular portion of the chain corresponds to 664 to 679 (YTVQIFQDAGSTIDGN). Residues 680-700 (VCTIIVGVVNFMATFIATVLI) form a helical membrane-spanning segment. Over 701–706 (DRAGRK) the chain is Cytoplasmic. Residues 707 to 727 (ILLYVSNVAMILTLFVLGGFF) traverse the membrane as a helical segment. Topologically, residues 728-746 (YCKSTGMDTSNVGWLPLSC) are extracellular. A helical membrane pass occupies residues 747 to 767 (FVVYILGFSLGFGPIPWLMMG). Topologically, residues 768-773 (EILPAK) are cytoplasmic. A helical membrane pass occupies residues 774–794 (IRGSAASVATAFNWSCTFVVT). Residues 795–807 (KSFQDMIDVMGAH) lie on the Extracellular side of the membrane. A helical transmembrane segment spans residues 808 to 828 (GAFWMFGAICFVGLFFVIFYV). The Cytoplasmic portion of the chain corresponds to 829-863 (PETQGKTLEDIERKMMGRVRRMSSVANIKPLSFNM). A phosphoserine mark is found at Ser851 and Ser852.

It belongs to the major facilitator superfamily. Sugar transporter (TC 2.A.1.1) family. Trehalose transporter subfamily.

The protein resides in the cell membrane. In terms of biological role, low-capacity facilitative transporter for trehalose. Does not transport maltose, sucrose or lactose. Mediates the bidirectional transfer of trehalose. Responsible for the transport of trehalose synthesized in the fat body and the incorporation of trehalose into other tissues that require a carbon source, thereby regulating trehalose levels in the hemolymph. This chain is Facilitated trehalose transporter Tret1, found in Drosophila mojavensis (Fruit fly).